The following is a 171-amino-acid chain: MYHVVCATTNPAKIQAILRAFSEIFGEASCHIDAVSVDSGVPEQPLGSEETRTGARQRVINARALRPQADYWVAIEAGIDDDSTFSWVVIESADQRGEARSATLPLPAAILNEVRAGKALGPVMSAWTGIDEIGRKEGAIGIFTAGKLTRSSVYHQAVILALSPFHNAIYR.

8-13 (TTNPAK) contributes to the substrate binding site. Residues Asp-38 and Gln-68 each coordinate Mg(2+).

Belongs to the YjjX NTPase family. Homodimer. Requires Mg(2+) as cofactor. Mn(2+) serves as cofactor.

The enzyme catalyses XTP + H2O = XDP + phosphate + H(+). The catalysed reaction is ITP + H2O = IDP + phosphate + H(+). In terms of biological role, phosphatase that hydrolyzes non-canonical purine nucleotides such as XTP and ITP to their respective diphosphate derivatives. Probably excludes non-canonical purines from DNA/RNA precursor pool, thus preventing their incorporation into DNA/RNA and avoiding chromosomal lesions. In Cronobacter sakazakii (strain ATCC BAA-894) (Enterobacter sakazakii), this protein is Inosine/xanthosine triphosphatase.